A 455-amino-acid chain; its full sequence is Glutamate-1-semialdehyde 2,1-aminomutase (455 aa).

N6-(pyridoxal phosphate)lysine is present on K286.

The protein belongs to the class-III pyridoxal-phosphate-dependent aminotransferase family. HemL subfamily. As to quaternary structure, homodimer. The cofactor is pyridoxal 5'-phosphate.

The protein localises to the cytoplasm. It carries out the reaction (S)-4-amino-5-oxopentanoate = 5-aminolevulinate. It participates in porphyrin-containing compound metabolism; protoporphyrin-IX biosynthesis; 5-aminolevulinate from L-glutamyl-tRNA(Glu): step 2/2. The polypeptide is Glutamate-1-semialdehyde 2,1-aminomutase (Clavibacter michiganensis subsp. michiganensis (strain NCPPB 382)).